A 154-amino-acid polypeptide reads, in one-letter code: Large ribosomal subunit protein uL23 (154 aa).

Positions 1 to 39 are disordered; sequence MAPAKADPSKKSDPKAQAAKVAKAVKSGSTLKKKSQKIR. The segment covering 15 to 26 has biased composition (low complexity); that stretch reads KAQAAKVAKAVK.

The protein belongs to the universal ribosomal protein uL23 family.

Functionally, this protein binds to a specific region on the 26S rRNA. The sequence is that of Large ribosomal subunit protein uL23 (RPL23A) from Nicotiana tabacum (Common tobacco).